We begin with the raw amino-acid sequence, 384 residues long: MTLPELPKDLVEEILCFVPATSLKRLRSSCKEWNRLFKDDKRFARKHIEKAAKQFQPLTLTKNYRICPINVNLHGTTPSLEVKNEVSLVDPHSKNSAAQFNIDRVFHCDGLLLCTSQKDSRFVVWNPLTGVTKWIELGDRYNEGMAFILGYDNKSCNKSYKAMSFNYLDKDSEIYEFSSDSWRVIDDIIKPPHYMDYFRECFSLKGNTYWLGIDRRRRPPDLRITLIKFDFGTERFGYVSLPPPCQVHGFEASNLSVVGDEKLSVLVQGGSTSKTEVWVTSKIGEANVVSWSKVLSLYPKPDVGFWHGLSFLLDEEKKVVLCCKSKGWMEEEDEENVYSVGEDTKFILLNFGVQTIGGYSPIIVNYVPSLGQIELAGSKRKRDY.

In terms of domain architecture, F-box spans 1–46; the sequence is MTLPELPKDLVEEILCFVPATSLKRLRSSCKEWNRLFKDDKRFARK. Kelch repeat units follow at residues 156 to 202, 264 to 314, and 352 to 384; these read CNKS…RECF, SVLV…FLLD, and GVQTIGGYSPIIVNYVPSLGQIELAGSKRKRDY.

The sequence is that of F-box/kelch-repeat protein At3g44120 from Arabidopsis thaliana (Mouse-ear cress).